The sequence spans 620 residues: Transcription factor GTE11 (620 aa).

A disordered region spans residues 1 to 35 (MTVRNGGFPGDYNRNSFDSPGGCDDSPNASKDDET). The region spanning 124–230 (TSTMLRMKQC…KFFEVRWKTI (107 aa)) is the Bromo domain. An NET domain is found at 270 to 351 (NSLLEPAKRV…EFLRENQKKD (82 aa)). Ser417 is modified (phosphoserine). Residues 445–620 (EKRYRAALLK…GNEVEEGEID (176 aa)) are transcription activation domain. Positions 470–544 (NQNEKRDPET…MEKSVEINEN (75 aa)) form a coiled coil. Disordered regions lie at residues 491–511 (KKKE…ARRK) and 597–620 (EDED…GEID).

As to quaternary structure, interacts with BT1, BT2 and BT4.

The protein resides in the nucleus. The sequence is that of Transcription factor GTE11 (GTE11) from Arabidopsis thaliana (Mouse-ear cress).